We begin with the raw amino-acid sequence, 199 residues long: Fe/S biogenesis protein NfuA (199 aa).

Residues Cys-151 and Cys-154 each contribute to the [4Fe-4S] cluster site.

The protein belongs to the NfuA family. In terms of assembly, homodimer. It depends on [4Fe-4S] cluster as a cofactor.

Involved in iron-sulfur cluster biogenesis. Binds a 4Fe-4S cluster, can transfer this cluster to apoproteins, and thereby intervenes in the maturation of Fe/S proteins. Could also act as a scaffold/chaperone for damaged Fe/S proteins. This is Fe/S biogenesis protein NfuA from Xylella fastidiosa (strain M23).